Reading from the N-terminus, the 211-residue chain is uncharacterized protein (211 aa).

The Zn(2+) site is built by H54, H56, D58, H59, H129, D148, and H189.

This sequence belongs to the metallo-beta-lactamase superfamily. Glyoxalase II family. Zn(2+) is required as a cofactor.

This is an uncharacterized protein from Aquifex aeolicus (strain VF5).